Reading from the N-terminus, the 385-residue chain is MKALHFGAGNIGRGFIGKLLADSGIQVIFADVNDHVIEQLKTQRAYPVKIVGDRLNVIETVSNVTGVNSKNEADIIACFTEVDLVTTAVGPNVLKIISSTIAKGLSARFRAGNTRPLNIIACENMVRGTSFLKDNVFSYLTPEEQQQAEAQIGFVDSAVDRIVPPVQFDPANPLLVTVEEFSEWIVDKTQFKGTIPAITGMEQTDNLMAFVERKLFTLNTGHATTAYLGKLKGHQFVKDSIDDPDIREAVKATMQESGAVLIKRYGFDPHAHAAYIEKILKRFANPYLQDDVDRVGREPLRKLSYNDRLIKPLRGTLEYGLPNQHLIQTIASALAYRNESDPQAVELAQLLQQDTLESAVKKITELTESNIVQQIVTAYNALQKN.

3-14 (ALHFGAGNIGRG) contributes to the NAD(+) binding site.

It belongs to the mannitol dehydrogenase family.

It carries out the reaction D-mannitol 1-phosphate + NAD(+) = beta-D-fructose 6-phosphate + NADH + H(+). The chain is Mannitol-1-phosphate 5-dehydrogenase from Pasteurella multocida (strain Pm70).